The primary structure comprises 161 residues: Putative HTH-type transcriptional regulator MT1325 (161 aa).

The region spanning 2–132 (RMSAKAEYAV…EETTLADVAG (131 aa)) is the HTH rrf2-type domain.

This chain is Putative HTH-type transcriptional regulator MT1325, found in Mycobacterium tuberculosis (strain CDC 1551 / Oshkosh).